The sequence spans 236 residues: Leucyl/phenylalanyl-tRNA--protein transferase (236 aa).

Belongs to the L/F-transferase family.

It is found in the cytoplasm. The catalysed reaction is N-terminal L-lysyl-[protein] + L-leucyl-tRNA(Leu) = N-terminal L-leucyl-L-lysyl-[protein] + tRNA(Leu) + H(+). It catalyses the reaction N-terminal L-arginyl-[protein] + L-leucyl-tRNA(Leu) = N-terminal L-leucyl-L-arginyl-[protein] + tRNA(Leu) + H(+). The enzyme catalyses L-phenylalanyl-tRNA(Phe) + an N-terminal L-alpha-aminoacyl-[protein] = an N-terminal L-phenylalanyl-L-alpha-aminoacyl-[protein] + tRNA(Phe). In terms of biological role, functions in the N-end rule pathway of protein degradation where it conjugates Leu, Phe and, less efficiently, Met from aminoacyl-tRNAs to the N-termini of proteins containing an N-terminal arginine or lysine. The protein is Leucyl/phenylalanyl-tRNA--protein transferase of Shewanella putrefaciens (strain CN-32 / ATCC BAA-453).